A 134-amino-acid polypeptide reads, in one-letter code: Large ribosomal subunit protein bL20 (134 aa).

This sequence belongs to the bacterial ribosomal protein bL20 family.

Functionally, binds directly to 23S ribosomal RNA and is necessary for the in vitro assembly process of the 50S ribosomal subunit. It is not involved in the protein synthesizing functions of that subunit. The sequence is that of Large ribosomal subunit protein bL20 from Rhizobium meliloti (strain 1021) (Ensifer meliloti).